An 856-amino-acid chain; its full sequence is Structure-specific endonuclease subunit SLX4 (856 aa).

A compositionally biased stretch (polar residues) spans 1-19 (MDNAAIASQSNTPPSNGRS). 9 disordered regions span residues 1 to 24 (MDNA…ARFV), 38 to 65 (VIEP…SHKI), 88 to 121 (VDSP…HKMA), 139 to 202 (KTRK…DNEL), 296 to 326 (GIQT…KKPQ), 362 to 392 (KKMG…GNGP), 621 to 640 (SKSS…SQGD), 668 to 689 (RLAK…NEGP), and 715 to 742 (DSVG…QDCD). The segment covering 51–60 (STLLTSLSKS) has biased composition (low complexity). Over residues 139–152 (KTRKKKAATAKRTR) the composition is skewed to basic residues. Residues 296–309 (GIQTPTESRPATND) show a composition bias toward polar residues. Over residues 673–686 (SVKSQEPKSFSLSN) the composition is skewed to polar residues.

Belongs to the SLX4 family. Forms a heterodimer with SLX1. Phosphorylated in response to DNA damage.

It localises to the nucleus. Regulatory subunit of the SLX1-SLX4 structure-specific endonuclease that resolves DNA secondary structures generated during DNA repair and recombination. Has endonuclease activity towards branched DNA substrates, introducing single-strand cuts in duplex DNA close to junctions with ss-DNA. This Blastomyces gilchristii (strain SLH14081) (Blastomyces dermatitidis) protein is Structure-specific endonuclease subunit SLX4.